A 225-amino-acid polypeptide reads, in one-letter code: Uracil-DNA glycosylase (225 aa).

Asp-65 serves as the catalytic Proton acceptor.

It belongs to the uracil-DNA glycosylase (UDG) superfamily. UNG family.

Its subcellular location is the cytoplasm. The catalysed reaction is Hydrolyzes single-stranded DNA or mismatched double-stranded DNA and polynucleotides, releasing free uracil.. Its function is as follows. Excises uracil residues from the DNA which can arise as a result of misincorporation of dUMP residues by DNA polymerase or due to deamination of cytosine. The protein is Uracil-DNA glycosylase of Bacillus cereus (strain G9842).